Reading from the N-terminus, the 609-residue chain is Sulfite reductase [NADPH] flavoprotein alpha-component (609 aa).

The region spanning 72–210 (ITLISASQTG…LAAQWRRQLV (139 aa)) is the Flavodoxin-like domain. Residues 78–83 (SQTGNA) and 125–128 (STQG) each bind FMN. In terms of domain architecture, FAD-binding FR-type spans 244-458 (SSPLQATFAV…IEHNDNFRLP (215 aa)). Residues Thr332, Gln366, 396–399 (RLYS), 414–416 (TVG), Tyr420, and 429–432 (GGAS) contribute to the FAD site. NADP(+)-binding positions include 529–530 (SR), 535–539 (KIYVQ), and Asp571. Tyr609 contributes to the FAD binding site.

It belongs to the NADPH-dependent sulphite reductase flavoprotein subunit CysJ family. The protein in the N-terminal section; belongs to the flavodoxin family. In the C-terminal section; belongs to the flavoprotein pyridine nucleotide cytochrome reductase family. In terms of assembly, alpha(8)-beta(8). The alpha component is a flavoprotein, the beta component is a hemoprotein. Requires FAD as cofactor. The cofactor is FMN.

The catalysed reaction is hydrogen sulfide + 3 NADP(+) + 3 H2O = sulfite + 3 NADPH + 4 H(+). Its pathway is sulfur metabolism; hydrogen sulfide biosynthesis; hydrogen sulfide from sulfite (NADPH route): step 1/1. Its function is as follows. Component of the sulfite reductase complex that catalyzes the 6-electron reduction of sulfite to sulfide. This is one of several activities required for the biosynthesis of L-cysteine from sulfate. The flavoprotein component catalyzes the electron flow from NADPH -&gt; FAD -&gt; FMN to the hemoprotein component. The chain is Sulfite reductase [NADPH] flavoprotein alpha-component from Pectobacterium atrosepticum (strain SCRI 1043 / ATCC BAA-672) (Erwinia carotovora subsp. atroseptica).